Here is a 604-residue protein sequence, read N- to C-terminus: Sulfite reductase [NADPH] flavoprotein alpha-component (604 aa).

One can recognise a Flavodoxin-like domain in the interval 65–203 (VTILYGSQTG…AAGQWHADVL (139 aa)). Residues 71 to 76 (SQTGNG), 118 to 121 (STHG), and 154 to 163 (LGDSSYEFFC) contribute to the FMN site. The 218-residue stretch at 236 to 453 (QNPYSAEVLV…VEPNKHFRLP (218 aa)) folds into the FAD-binding FR-type domain. FAD is bound by residues threonine 324, leucine 358, 392 to 395 (RLYS), 410 to 412 (TVA), and 425 to 428 (GGAS). NADP(+)-binding positions include 524–525 (SR), 530–534 (KIYVQ), and aspartate 566. Tyrosine 604 is a binding site for FAD.

Belongs to the NADPH-dependent sulphite reductase flavoprotein subunit CysJ family. It in the N-terminal section; belongs to the flavodoxin family. The protein in the C-terminal section; belongs to the flavoprotein pyridine nucleotide cytochrome reductase family. Alpha(8)-beta(8). The alpha component is a flavoprotein, the beta component is a hemoprotein. Requires FAD as cofactor. It depends on FMN as a cofactor.

It catalyses the reaction hydrogen sulfide + 3 NADP(+) + 3 H2O = sulfite + 3 NADPH + 4 H(+). It participates in sulfur metabolism; hydrogen sulfide biosynthesis; hydrogen sulfide from sulfite (NADPH route): step 1/1. Component of the sulfite reductase complex that catalyzes the 6-electron reduction of sulfite to sulfide. This is one of several activities required for the biosynthesis of L-cysteine from sulfate. The flavoprotein component catalyzes the electron flow from NADPH -&gt; FAD -&gt; FMN to the hemoprotein component. This is Sulfite reductase [NADPH] flavoprotein alpha-component from Shewanella sp. (strain MR-7).